Consider the following 290-residue polypeptide: Endoplasmic reticulum-Golgi intermediate compartment protein 1 (290 aa).

The Cytoplasmic segment spans residues 1–26; the sequence is MPFDFRRFDIYRKVPKDLTQPTYTGA. A helical transmembrane segment spans residues 27–47; the sequence is IISICCCLFILFLFLSELTGF. Topologically, residues 48-254 are lumenal; that stretch reads ITTEVVNELY…RRQPLYRFIT (207 aa). Asparagine 74 is a glycosylation site (N-linked (GlcNAc...) asparagine). A helical transmembrane segment spans residues 255 to 275; sequence TICAIIGGTFTVAGILDSCIF. Residues 276–290 are Cytoplasmic-facing; it reads TASEAWKKIQLGKIH.

The protein belongs to the ERGIC family. As to quaternary structure, may form a heteromeric complex composed of ERGIC1, ERGIC2 and ERGIC3. Within the complex, the interaction with ERGIC3 is direct. Interacts with ERGIC3/ERV46. In terms of processing, N-glycosylated.

The protein localises to the endoplasmic reticulum membrane. Its subcellular location is the endoplasmic reticulum-Golgi intermediate compartment membrane. It localises to the golgi apparatus membrane. Functionally, possible role in transport between endoplasmic reticulum and Golgi. This chain is Endoplasmic reticulum-Golgi intermediate compartment protein 1 (Ergic1), found in Mus musculus (Mouse).